The primary structure comprises 107 residues: EMBRYO SURROUNDING FACTOR 1-like protein 5 (107 aa).

A signal peptide spans 1 to 22 (MSLLRFAILCIIFVSLFGVHEC). Intrachain disulfides connect Cys-35/Cys-49, Cys-40/Cys-69, Cys-47/Cys-65, and Cys-50/Cys-58. Residues 87-107 (GLGPPIYLFFLGQFIYFVLGL) traverse the membrane as a helical segment.

This sequence belongs to the MEG family. Expressed in flowers.

The protein resides in the membrane. The protein is EMBRYO SURROUNDING FACTOR 1-like protein 5 (ESFL5) of Arabidopsis thaliana (Mouse-ear cress).